The sequence spans 365 residues: tRNA-specific 2-thiouridylase MnmA (365 aa).

Residues 6–13 (AMSGGVDS) and M32 each bind ATP. C101 serves as the catalytic Nucleophile. An intrachain disulfide couples C101 to C199. An ATP-binding site is contributed by G125. Positions 148-150 (KDQ) are interaction with tRNA. C199 (cysteine persulfide intermediate) is an active-site residue.

It belongs to the MnmA/TRMU family.

The protein localises to the cytoplasm. It carries out the reaction S-sulfanyl-L-cysteinyl-[protein] + uridine(34) in tRNA + AH2 + ATP = 2-thiouridine(34) in tRNA + L-cysteinyl-[protein] + A + AMP + diphosphate + H(+). Functionally, catalyzes the 2-thiolation of uridine at the wobble position (U34) of tRNA, leading to the formation of s(2)U34. This Kineococcus radiotolerans (strain ATCC BAA-149 / DSM 14245 / SRS30216) protein is tRNA-specific 2-thiouridylase MnmA.